We begin with the raw amino-acid sequence, 444 residues long: MKNIEKSEIIISLVDVDKEFGDKKVLDQINLDIKRGDFVTLLGPSGSGKTTILRLIGGFEWTTRGEIKFNGIDIKDVPAHKRDTATIFQDYALFPHLSVRGNIEFGLKLKRIKKKAEEIPDVVWKKFEHLKKKWQDKQKRKIKELKILQAHLEKLLENPQLDIKKRKKLQDKLDDSDFRYSNWENYLTSKSESFKKKYLTRRITKQEINKEITDIIDLVGLTGNENRAISELSGGMKQRVALARSLVIEPEIVLLDEPLSALDTKIRQKMQVFLKKIQQKLGLTFIFVTHDQDEALQLSDKIAIIRNGKIAQYDEPKQIYDYPVNKWVANFIGDSNFFQAKYIKKNQVEILGLKLYTIHDEFIPGQKLDCLIRPEDIDIDLNSGYFKGKVIQNIYKGSYYSLDIKVENTIINVETNDFYDLETQVFIKWDDDAIHLMEMENAEI.

Residues 11-332 form the ABC transporter domain; the sequence is ISLVDVDKEF…PVNKWVANFI (322 aa). Position 43–50 (43–50) interacts with ATP; it reads GPSGSGKT. Residues 111 to 201 form an insert region; sequence RIKKKAEEIP…ESFKKKYLTR (91 aa).

Belongs to the ABC transporter superfamily. Spermidine/putrescine importer (TC 3.A.1.11.1) family. The complex is composed of two ATP-binding proteins (PotA), two transmembrane proteins (PotB and PotC) and a solute-binding protein (PotD).

It localises to the cell membrane. The catalysed reaction is ATP + H2O + polyamine-[polyamine-binding protein]Side 1 = ADP + phosphate + polyamineSide 2 + [polyamine-binding protein]Side 1.. Part of the ABC transporter complex PotABCD involved in spermidine/putrescine import. Responsible for energy coupling to the transport system. This is Spermidine/putrescine import ATP-binding protein PotA from Mesomycoplasma hyopneumoniae (strain 232) (Mycoplasma hyopneumoniae).